Reading from the N-terminus, the 269-residue chain is MATH domain and coiled-coil domain-containing protein At2g01790 (269 aa).

Residues 6 to 134 (AVKKLWVINN…NGEVDIVAEV (129 aa)) form the MATH domain. Positions 228 to 269 (KLDWLEKKLKETGKSRLQEIEEDLKDLKVKCADMDALLEFLR) form a coiled coil.

The sequence is that of MATH domain and coiled-coil domain-containing protein At2g01790 from Arabidopsis thaliana (Mouse-ear cress).